Consider the following 258-residue polypeptide: Imidazole glycerol phosphate synthase subunit HisF (258 aa).

Catalysis depends on residues Asp-11 and Asp-130.

Belongs to the HisA/HisF family. Heterodimer of HisH and HisF.

It localises to the cytoplasm. The enzyme catalyses 5-[(5-phospho-1-deoxy-D-ribulos-1-ylimino)methylamino]-1-(5-phospho-beta-D-ribosyl)imidazole-4-carboxamide + L-glutamine = D-erythro-1-(imidazol-4-yl)glycerol 3-phosphate + 5-amino-1-(5-phospho-beta-D-ribosyl)imidazole-4-carboxamide + L-glutamate + H(+). Its pathway is amino-acid biosynthesis; L-histidine biosynthesis; L-histidine from 5-phospho-alpha-D-ribose 1-diphosphate: step 5/9. Functionally, IGPS catalyzes the conversion of PRFAR and glutamine to IGP, AICAR and glutamate. The HisF subunit catalyzes the cyclization activity that produces IGP and AICAR from PRFAR using the ammonia provided by the HisH subunit. The sequence is that of Imidazole glycerol phosphate synthase subunit HisF from Magnetococcus marinus (strain ATCC BAA-1437 / JCM 17883 / MC-1).